Here is a 152-residue protein sequence, read N- to C-terminus: Nucleoside diphosphate kinase (152 aa).

Positions 11, 59, 87, 93, 104, and 114 each coordinate ATP. His-117 (pros-phosphohistidine intermediate) is an active-site residue.

This sequence belongs to the NDK family. Homotetramer. Mg(2+) serves as cofactor.

It localises to the cytoplasm. The catalysed reaction is dZDP + ATP = dZTP + ADP. The enzyme catalyses a 2'-deoxyribonucleoside 5'-diphosphate + ATP = a 2'-deoxyribonucleoside 5'-triphosphate + ADP. It catalyses the reaction a ribonucleoside 5'-diphosphate + ATP = a ribonucleoside 5'-triphosphate + ADP. The protein operates within purine metabolism. Major role in the synthesis of nucleoside triphosphates other than ATP. The ATP gamma phosphate is transferred to the NDP beta phosphate via a ping-pong mechanism, using a phosphorylated active-site intermediate. Functionally, (Microbial infection) Catalyzes the phosphorylation of dZDP to dZTP, when the bacterium is infected by a phage that produces the substrate for the synthesis of dZTP (2- amino-2'-deoxyadenosine 5'-triphosphate), which is then used by the phage as a DNA polymerase substrate. This Synechococcus sp. (strain CC9311) protein is Nucleoside diphosphate kinase.